The primary structure comprises 272 residues: Ethanolamine ammonia-lyase small subunit (272 aa).

Adenosylcob(III)alamin is bound by residues Val-161, Glu-182, and Cys-211.

This sequence belongs to the EutC family. The basic unit is a heterodimer which dimerizes to form tetramers. The heterotetramers trimerize; 6 large subunits form a core ring with 6 small subunits projecting outwards. Adenosylcob(III)alamin is required as a cofactor.

It is found in the bacterial microcompartment. The enzyme catalyses ethanolamine = acetaldehyde + NH4(+). Its pathway is amine and polyamine degradation; ethanolamine degradation. Catalyzes the deamination of various vicinal amino-alcohols to oxo compounds. Allows this organism to utilize ethanolamine as the sole source of nitrogen and carbon in the presence of external vitamin B12. In Pseudomonas putida (strain ATCC 47054 / DSM 6125 / CFBP 8728 / NCIMB 11950 / KT2440), this protein is Ethanolamine ammonia-lyase small subunit.